Reading from the N-terminus, the 932-residue chain is Isoleucine--tRNA ligase (932 aa).

The short motif at Pro58–His68 is the 'HIGH' region element. Glu559 is an L-isoleucyl-5'-AMP binding site. A 'KMSKS' region motif is present at residues Lys600–Ser604. Position 603 (Lys603) interacts with ATP. Zn(2+)-binding residues include Cys895, Cys898, Cys915, and Cys918.

This sequence belongs to the class-I aminoacyl-tRNA synthetase family. IleS type 1 subfamily. In terms of assembly, monomer. Requires Zn(2+) as cofactor.

It localises to the cytoplasm. The enzyme catalyses tRNA(Ile) + L-isoleucine + ATP = L-isoleucyl-tRNA(Ile) + AMP + diphosphate. In terms of biological role, catalyzes the attachment of isoleucine to tRNA(Ile). As IleRS can inadvertently accommodate and process structurally similar amino acids such as valine, to avoid such errors it has two additional distinct tRNA(Ile)-dependent editing activities. One activity is designated as 'pretransfer' editing and involves the hydrolysis of activated Val-AMP. The other activity is designated 'posttransfer' editing and involves deacylation of mischarged Val-tRNA(Ile). This is Isoleucine--tRNA ligase from Saccharophagus degradans (strain 2-40 / ATCC 43961 / DSM 17024).